A 279-amino-acid chain; its full sequence is Toxin TxP-I (279 aa).

The N-terminal stretch at 1–14 (MNLFFLFIIPTILA) is a signal peptide. A propeptide spanning residues 15-27 (VKPFRSFNNISLI) is cleaved from the precursor.

Contains several disulfide bonds. Posterior glands which appear to be connected with the stylet through a series of ducts.

It localises to the secreted. Its function is as follows. Part of a complex mixture of neurotoxins which P.tritici utilizes to capture prey. It has contracting-paralyzing activity in insects. The polypeptide is Toxin TxP-I (Pyemotes tritici (Straw itch mite)).